Consider the following 245-residue polypeptide: Uridylate kinase (245 aa).

16–19 contributes to the ATP binding site; it reads KLSG. Glycine 58 serves as a coordination point for UMP. Glycine 59 and arginine 63 together coordinate ATP. Residues aspartate 78 and 139–146 each bind UMP; that span reads TGNPFFTT. ATP contacts are provided by threonine 166, tyrosine 172, and aspartate 175.

Belongs to the UMP kinase family. In terms of assembly, homohexamer.

The protein localises to the cytoplasm. The catalysed reaction is UMP + ATP = UDP + ADP. Its pathway is pyrimidine metabolism; CTP biosynthesis via de novo pathway; UDP from UMP (UMPK route): step 1/1. Inhibited by UTP. Catalyzes the reversible phosphorylation of UMP to UDP. This chain is Uridylate kinase, found in Idiomarina loihiensis (strain ATCC BAA-735 / DSM 15497 / L2-TR).